The chain runs to 189 residues: T cell receptor gamma constant 2 (189 aa).

Residues Pro10–Ile104 form the Ig-like domain. Cys32 and Cys88 are oxidised to a cystine. N-linked (GlcNAc...) asparagine glycosylation is found at Asn66, Asn120, Asn136, Asn142, and Asn151. The chain crosses the membrane as a helical span at residues Tyr155–Leu177.

Gamma-delta TR is a heterodimer composed of a gamma and delta chain; disulfide-linked. The gamma-delta TR is associated with the transmembrane signaling CD3 coreceptor proteins following the stoichiometry: a single gamma-delta TR heterodimer associates with one CD3D-CD3E heterodimer, one CD3G-CD3E heterodimer and one CD247 homodimer forming a stable octameric structure. Upon activation, gamma-delta TR complex associates with FCER1G to initiate intracellular signaling.

The protein localises to the cell membrane. Its function is as follows. Constant region of T cell receptor (TR) gamma chain that participates in the antigen recognition. Gamma-delta TRs recognize a variety of self and foreign non-peptide antigens frequently expressed at the epithelial boundaries between the host and external environment, including endogenous lipids presented by MH-like protein CD1D and phosphoantigens presented by butyrophilin-like molecule BTN3A1. Upon antigen recognition induces rapid, innate-like immune responses involved in pathogen clearance and tissue repair. Binding of gamma-delta TR complex to antigen triggers phosphorylation of immunoreceptor tyrosine-based activation motifs (ITAMs) in the CD3 chains by the LCK and FYN kinases, allowing the recruitment, phosphorylation, and activation of ZAP70 that facilitates phosphorylation of the scaffolding proteins LCP2 and LAT. This lead to the formation of a supramolecular signalosome that recruits the phospholipase PLCG1, resulting in calcium mobilization and ERK activation, ultimately leading to T cell expansion and differentiation into effector cells. Gamma-delta TRs are produced through somatic rearrangement of a limited repertoire of variable (V), diversity (D), and joining (J) genes. The potential diversity of gamma-delta TRs is conferred by the unique ability to rearrange (D) genes in tandem and to utilize all three reading frames. The combinatorial diversity is considerably increased by the sequence exonuclease trimming and random nucleotide (N) region additions which occur during the V-(D)-J rearrangements. The protein is T cell receptor gamma constant 2 of Homo sapiens (Human).